The sequence spans 104 residues: Large ribosomal subunit protein uL23 (104 aa).

This sequence belongs to the universal ribosomal protein uL23 family. In terms of assembly, part of the 50S ribosomal subunit. Contacts protein L29, and trigger factor when it is bound to the ribosome.

Its function is as follows. One of the early assembly proteins it binds 23S rRNA. One of the proteins that surrounds the polypeptide exit tunnel on the outside of the ribosome. Forms the main docking site for trigger factor binding to the ribosome. The sequence is that of Large ribosomal subunit protein uL23 from Polynucleobacter necessarius subsp. necessarius (strain STIR1).